Here is a 74-residue protein sequence, read N- to C-terminus: MSGGSSRRYPPELRERAVRMVAEIRGQHDSEWAAISEIARLLGVAARRRCVSGCARRRSMPAHGPGPRPKNPLR.

The sequence is that of Insertion element IS986 uncharacterized 8.2 kDa protein from Mycobacterium tuberculosis.